Here is a 277-residue protein sequence, read N- to C-terminus: Pristinamycin IIA synthase subunit B (277 aa).

As to quaternary structure, heterodimer of two subunits, SnaA and SnaB. It depends on FMN as a cofactor.

Catalyzes the oxidation of the proline residue of pristinamycin IIB (PIIB) to pristinamycin IIA (PIIA). The protein is Pristinamycin IIA synthase subunit B (snaB) of Streptomyces pristinaespiralis.